Here is a 70-residue protein sequence, read N- to C-terminus: Exodeoxyribonuclease 7 small subunit (70 aa).

It belongs to the XseB family. In terms of assembly, heterooligomer composed of large and small subunits.

The protein resides in the cytoplasm. The enzyme catalyses Exonucleolytic cleavage in either 5'- to 3'- or 3'- to 5'-direction to yield nucleoside 5'-phosphates.. Bidirectionally degrades single-stranded DNA into large acid-insoluble oligonucleotides, which are then degraded further into small acid-soluble oligonucleotides. This is Exodeoxyribonuclease 7 small subunit from Magnetococcus marinus (strain ATCC BAA-1437 / JCM 17883 / MC-1).